A 236-amino-acid polypeptide reads, in one-letter code: Peroxisomal coenzyme A diphosphatase NUDT7 (236 aa).

Lysine 20 is modified (N6-succinyllysine). Residues 37 to 169 (SNKFSVLVPL…QKQITQSGRD (133 aa)) enclose the Nudix hydrolase domain. Residues 77–98 (KRDPVDTDDTATALREAQEEVG) carry the Nudix box motif. Positions 92 and 96 each coordinate Mg(2+). Lysine 178 is subject to N6-succinyllysine. Residues 234-236 (SKL) carry the Microbody targeting signal motif.

The protein belongs to the Nudix hydrolase family. PCD1 subfamily. Monomer. Mn(2+) is required as a cofactor. Mg(2+) serves as cofactor. In terms of tissue distribution, highly expressed in liver, brown adipose tissue and heart. Expressed at intermediate level in lung and kidney and at low level in brain. As to expression, expressed in liver, brown adipose tissue and heart at 20 times lower levels than isoform 1.

Its subcellular location is the peroxisome. The enzyme catalyses hexanoyl-CoA + H2O = hexanoyl-4'-phosphopantetheine + adenosine 3',5'-bisphosphate + 2 H(+). It catalyses the reaction octanoyl-CoA + H2O = S-octanoyl-4'-phosphopantetheine + adenosine 3',5'-bisphosphate + 2 H(+). The catalysed reaction is butanoyl-CoA + H2O = S-butanoyl-4'-phosphopantetheine + adenosine 3',5'-bisphosphate + 2 H(+). It carries out the reaction decanoyl-CoA + H2O = decanoyl-4'-phosphopantetheine + adenosine 3',5'-bisphosphate + 2 H(+). The enzyme catalyses dodecanoyl-CoA + H2O = S-dodecanoyl-4'-phosphopantetheine + adenosine 3',5'-bisphosphate + 2 H(+). It catalyses the reaction tetradecanoyl-CoA + H2O = tetradecanoyl-4'-phosphopantetheine + adenosine 3',5'-bisphosphate + 2 H(+). The catalysed reaction is choloyl-CoA + H2O = S-choloyl-4'-phosphopantetheine + adenosine 3',5'-bisphosphate + 2 H(+). It carries out the reaction 3alpha,7alpha,12alpha-trihydroxy-5beta-cholestan-26-oyl-CoA + H2O = 3alpha,7alpha,12alpha-trihydroxy-5beta-cholestan-26-oyl-4'-phosphopantetheine + adenosine 3',5'-bisphosphate + 2 H(+). The enzyme catalyses acetyl-CoA + H2O = S-acetyl-4'-phosphopantetheine + adenosine 3',5'-bisphosphate + 2 H(+). It catalyses the reaction CoA + H2O = (R)-4'-phosphopantetheine + adenosine 3',5'-bisphosphate + 2 H(+). The catalysed reaction is propanoyl-CoA + H2O = propanoyl-4'-phosphopantetheine + adenosine 3',5'-bisphosphate + 2 H(+). It carries out the reaction malonyl-CoA + H2O = malonyl-4'-phosphopantetheine + adenosine 3',5'-bisphosphate + 2 H(+). The enzyme catalyses succinyl-CoA + H2O = succinyl-4'-phosphopantetheine + adenosine 3',5'-bisphosphate + 2 H(+). It catalyses the reaction a 5'-end CoA-ribonucleoside in mRNA + H2O = a 5'-end phospho-adenosine-phospho-ribonucleoside in mRNA + (R)-4'-phosphopantetheine + 2 H(+). Inhibited by fluoride. Functionally, fatty acyl-coenzyme A (CoA) diphosphatase that hydrolyzes fatty acyl-CoA to yield acyl-4'-phosphopantetheine and adenosine 3',5'-bisphosphate. Cleaves CoA, CoA esters and oxidized CoA with similar efficiencies. Preferentially hydrolyzes medium-chain acyl-CoAs and bile acid-CoAs. Has no activity toward NDP-sugars, CDP-alcohols, (deoxy)nucleoside 5'-triphosphates, nucleoside 5'-di or monophosphates, diadenosine polyphosphates, NAD, NADH, NADP, NADPH or thymidine-5'-monophospho-p-nitrophenyl ester. May be required to eliminate oxidized CoA from peroxisomes, or regulate CoA and acyl-CoA levels in this organelle in response to metabolic demand. Does not play a role in U8 snoRNA decapping activity. Binds U8 snoRNA. Exhibits decapping activity towards dpCoA-capped RNAs in vitro. The chain is Peroxisomal coenzyme A diphosphatase NUDT7 from Mus musculus (Mouse).